The following is a 144-amino-acid chain: Globin-1 (144 aa).

Positions 1–141 constitute a Globin domain; it reads VSANDIKNVQ…ILHQMSSYFA (141 aa). His-89 contacts heme b.

This sequence belongs to the globin family. In terms of assembly, homodimer.

In Phreagena soyoae (Deep-sea cold-seep clam), this protein is Globin-1.